Reading from the N-terminus, the 430-residue chain is MNTTIKEAKQYIGQEVTIGAWLTNKRSSGKIAFLQLRDGTGFIQGVVAKAEVDEEIFQKAKEITQESSLYVTGVISEDNRSDIGYEMQVKSIEVISEAHDYPITPKNHGTEFLMDHRHLWLRSKKQHAVMKIRNEIIRATYEFFNDNGFTKIDPPILTASAPEGTSELFHTKYFDQDAFLSQSGQLYMEAAAMAHGRVFSFGPTFRAEKSKTRRHLIEFWMIEPEMAFCEHAQSLEVQEQYVTHVVKSVLNHCKLELKALDRDTSKLEKVTTPFPRITYADAVIFLKEQGFDDIEWGEDFGAPHETAIANHYDLPVFITNYPTKIKPFYMQPNPENEDTVLCADLIAPEGYGEIIGGSERINDLELLEERLSQFELDAESYSYYLDLRRYGSVPHSGFGLGLERTVAWLSGVEHVRETAPFPRLLNRLYP.

This sequence belongs to the class-II aminoacyl-tRNA synthetase family. Homodimer.

The protein resides in the cytoplasm. The catalysed reaction is tRNA(Asn) + L-asparagine + ATP = L-asparaginyl-tRNA(Asn) + AMP + diphosphate + H(+). This chain is Asparagine--tRNA ligase, found in Staphylococcus saprophyticus subsp. saprophyticus (strain ATCC 15305 / DSM 20229 / NCIMB 8711 / NCTC 7292 / S-41).